Consider the following 325-residue polypeptide: DNA-directed RNA polymerase subunit alpha (325 aa).

Positions 1–231 (MQTSLLKPKI…DQLSVFAALE (231 aa)) are alpha N-terminal domain (alpha-NTD). Residues 246–325 (IDPILLRPVD…ENWPPAGLDK (80 aa)) are alpha C-terminal domain (alpha-CTD).

It belongs to the RNA polymerase alpha chain family. In terms of assembly, homodimer. The RNAP catalytic core consists of 2 alpha, 1 beta, 1 beta' and 1 omega subunit. When a sigma factor is associated with the core the holoenzyme is formed, which can initiate transcription.

The enzyme catalyses RNA(n) + a ribonucleoside 5'-triphosphate = RNA(n+1) + diphosphate. DNA-dependent RNA polymerase catalyzes the transcription of DNA into RNA using the four ribonucleoside triphosphates as substrates. The sequence is that of DNA-directed RNA polymerase subunit alpha from Burkholderia multivorans (strain ATCC 17616 / 249).